Reading from the N-terminus, the 131-residue chain is Ribonuclease VapC4 (131 aa).

In terms of domain architecture, PINc spans 4 to 106; it reads IVPDTNFLIY…IVATNDKELK (103 aa). Mg(2+) contacts are provided by D7 and D102.

It belongs to the PINc/VapC protein family. It depends on Mg(2+) as a cofactor.

Its function is as follows. Toxic component of a type II toxin-antitoxin (TA) system. An RNase. Its cognate antitoxin is VapB4. The protein is Ribonuclease VapC4 of Methanocaldococcus jannaschii (strain ATCC 43067 / DSM 2661 / JAL-1 / JCM 10045 / NBRC 100440) (Methanococcus jannaschii).